We begin with the raw amino-acid sequence, 486 residues long: Protein hold'em (486 aa).

Residues 166–285 (IITTNVNLLV…DCRLLLAFAA (120 aa)) constitute a DNA-binding region (OB).

It belongs to the MEIOB family. Interacts with mei-9 and Ercc1.

Its function is as follows. Single-stranded DNA-binding protein required for meiosis. May be involved in the resolution of recombination intermediates into crossovers in the meiotic recombination pathway. This is Protein hold'em (hdm) from Drosophila melanogaster (Fruit fly).